The primary structure comprises 165 residues: RxLR effector protein CRE12 (165 aa).

An N-terminal signal peptide occupies residues Met-1–Ala-23. The RxLR-dEER signature appears at Arg-40–Arg-59.

It belongs to the RxLR effector family.

It is found in the secreted. The protein resides in the host cell. In terms of biological role, effector that is involved in host plant infection. Contributes to virulence during the early infection stage, by inhibiting plant defense responses induced by both PAMP-triggered immunity (PTI) and effector-triggered immunity (ETI). The sequence is that of RxLR effector protein CRE12 from Phytophthora infestans (strain T30-4) (Potato late blight agent).